A 145-amino-acid chain; its full sequence is uncharacterized protein (145 aa).

The protein belongs to the asfivirus K145R family.

The protein localises to the virion. This is an uncharacterized protein from Ornithodoros (relapsing fever ticks).